The sequence spans 167 residues: Centrin-3 (167 aa).

EF-hand domains are found at residues 25-60 (EQKQ…LGFD), 61-96 (VKKA…WILE), 98-133 (DPHE…LGEN), and 134-167 (MSDE…TGDI). Position 135 is a phosphoserine (Ser-135). Ca(2+) is bound by residues Asp-147, Asp-149, Asp-151, Glu-153, and Glu-158.

This sequence belongs to the centrin family. In terms of assembly, monomer. Component of the nuclear pore complex (NPC)-associated TREX-2 complex (transcription and export complex 2), composed of at least GANP, 2 copies of ENY2, PCID2, SEM1/DSS1, and either centrin CETN2 or centrin CETN3. The TREX-2 complex also associates with ALYREF/ALY and with the nucleoporin NUP153. Interacts with USP49.

The protein localises to the cytoplasm. Its subcellular location is the cytoskeleton. It is found in the microtubule organizing center. The protein resides in the centrosome. It localises to the nucleus. The protein localises to the nucleolus. Its subcellular location is the nucleus envelope. It is found in the nuclear pore complex. The protein resides in the centriole. Functionally, plays a fundamental role in microtubule-organizing center structure and function. Its function is as follows. As a component of the TREX-2 complex, involved in the export of mRNAs to the cytoplasm through the nuclear pores. The chain is Centrin-3 (CETN3) from Homo sapiens (Human).